A 384-amino-acid polypeptide reads, in one-letter code: Putative ankyrin repeat protein L72 (384 aa).

ANK repeat units lie at residues 88–117, 119–146, 171–200, 202–231, 233–261, 298–324, and 325–357; these read ADMC…NIKN, GNLL…KEFS, DHNV…ILSV, DDSL…DIES, NNYC…NPNN, ILYQ…AGIK, and PTNS…DINV.

The sequence is that of Putative ankyrin repeat protein L72 from Acanthamoeba polyphaga (Amoeba).